We begin with the raw amino-acid sequence, 158 residues long: Photosystem I assembly protein Ycf3 (158 aa).

3 TPR repeats span residues 35 to 68 (AFSY…EEDV), 72 to 105 (SYII…NPRL), and 113 to 146 (AVIY…APGQ).

The protein belongs to the Ycf3 family.

The protein localises to the plastid. Its subcellular location is the chloroplast thylakoid membrane. Functionally, essential for the assembly of the photosystem I (PSI) complex. May act as a chaperone-like factor to guide the assembly of the PSI subunits. This is Photosystem I assembly protein Ycf3 from Cyanidioschyzon merolae (strain NIES-3377 / 10D) (Unicellular red alga).